Here is a 742-residue protein sequence, read N- to C-terminus: uncharacterized protein (742 aa).

Residues 167–471 (GIVPPEPWGH…AAGAAGGGGA (305 aa)) form a disordered region. Residues 205-218 (PAPPPSLFAPPPPS) show a composition bias toward pro residues. Polar residues-rich tracts occupy residues 318–331 (SPAT…NAVS) and 358–368 (GSPQTLSTAPS). Residues 386–401 (TAGPAAPPTTGGPPAP) are compositionally biased toward pro residues. Positions 421 to 432 (PLSGGVPGGAVP) are enriched in low complexity. A compositionally biased stretch (pro residues) spans 433 to 447 (LGPPPTPPPAAPVTT). Positions 448-464 (PPLASGAPVAPTGAAAG) are enriched in low complexity.

Functionally, may be involved in the ESX-1 / type VII specialized secretion system (T7SS), which exports several proteins including EsxA and EsxB. Involved in DNA conjugation in the recipient strain. This is an uncharacterized protein from Mycolicibacterium smegmatis (strain MKD8) (Mycobacterium smegmatis).